A 206-amino-acid chain; its full sequence is MKPQFITLDGIDGAGKSTNLAVIKAWFERRGLPVLFTREPGGTPVGEALREILLNPETKAGLRAETLMMFAARMQHIEEVILPALSDGIHVVSDRFTDATFAYQGGGRGMPSEDIEILEHWVQGGLKPDLTLLLDVPLEVSMARIGQTREKDRFEQEQADFFMRVRGVYLDRAAACPERYAVIDSNRNLDEVRNSIEKVLDGHFGC.

10–17 (GIDGAGKS) is a binding site for ATP.

This sequence belongs to the thymidylate kinase family.

The enzyme catalyses dTMP + ATP = dTDP + ADP. Functionally, phosphorylation of dTMP to form dTDP in both de novo and salvage pathways of dTTP synthesis. The polypeptide is Thymidylate kinase (tmk) (Neisseria meningitidis serogroup B (strain ATCC BAA-335 / MC58)).